A 216-amino-acid polypeptide reads, in one-letter code: Uracil phosphoribosyltransferase (216 aa).

5-phospho-alpha-D-ribose 1-diphosphate-binding positions include arginine 85, arginine 110, and 135-143; that span reads DPMVATGYS. Uracil-binding positions include isoleucine 200 and 205-207; that span reads GDA. Aspartate 206 is a 5-phospho-alpha-D-ribose 1-diphosphate binding site.

This sequence belongs to the UPRTase family. The cofactor is Mg(2+).

The enzyme catalyses UMP + diphosphate = 5-phospho-alpha-D-ribose 1-diphosphate + uracil. It participates in pyrimidine metabolism; UMP biosynthesis via salvage pathway; UMP from uracil: step 1/1. Allosterically activated by GTP. Catalyzes the conversion of uracil and 5-phospho-alpha-D-ribose 1-diphosphate (PRPP) to UMP and diphosphate. The polypeptide is Uracil phosphoribosyltransferase (Paraburkholderia phytofirmans (strain DSM 17436 / LMG 22146 / PsJN) (Burkholderia phytofirmans)).